Consider the following 340-residue polypeptide: Cathepsin B (340 aa).

The first 17 residues, 1 to 17 (MSWSRSILCLLGAFANA), serve as a signal peptide directing secretion. Positions 18–79 (RSIPYYPPLS…ERVDFAEDMD (62 aa)) are cleaved as a propeptide — activation peptide. N-linked (GlcNAc...) asparagine glycosylation occurs at Asn38. Cystine bridges form between Cys93/Cys122, Cys105/Cys150, Cys141/Cys208, Cys142/Cys146, Cys179/Cys212, and Cys187/Cys198. Cys108 is an active-site residue. N-linked (GlcNAc...) asparagine glycosylation occurs at Asn192. Residues His279 and Asn299 contribute to the active site.

The protein belongs to the peptidase C1 family. Dimer of a heavy chain and a light chain cross-linked by a disulfide bond.

It is found in the lysosome. The enzyme catalyses Hydrolysis of proteins with broad specificity for peptide bonds. Preferentially cleaves -Arg-Arg-|-Xaa bonds in small molecule substrates (thus differing from cathepsin L). In addition to being an endopeptidase, shows peptidyl-dipeptidase activity, liberating C-terminal dipeptides.. Functionally, thiol protease which is believed to participate in intracellular degradation and turnover of proteins. Has also been implicated in tumor invasion and metastasis. In Gallus gallus (Chicken), this protein is Cathepsin B (CTSB).